Reading from the N-terminus, the 140-residue chain is Nucleoside diphosphate kinase (140 aa).

ATP-binding residues include K11, F59, R87, T93, R104, and N114. The Pros-phosphohistidine intermediate role is filled by H117.

It belongs to the NDK family. As to quaternary structure, homotetramer. Requires Mg(2+) as cofactor.

The protein resides in the cytoplasm. The catalysed reaction is a 2'-deoxyribonucleoside 5'-diphosphate + ATP = a 2'-deoxyribonucleoside 5'-triphosphate + ADP. It carries out the reaction a ribonucleoside 5'-diphosphate + ATP = a ribonucleoside 5'-triphosphate + ADP. Functionally, major role in the synthesis of nucleoside triphosphates other than ATP. The ATP gamma phosphate is transferred to the NDP beta phosphate via a ping-pong mechanism, using a phosphorylated active-site intermediate. The chain is Nucleoside diphosphate kinase from Methylorubrum extorquens (strain CM4 / NCIMB 13688) (Methylobacterium extorquens).